We begin with the raw amino-acid sequence, 550 residues long: Chaperonin GroEL (550 aa).

ATP-binding positions include 30-33 (TLGP), Lys-51, 87-91 (DGTTT), Gly-415, and Asp-497.

This sequence belongs to the chaperonin (HSP60) family. In terms of assembly, forms a cylinder of 14 subunits composed of two heptameric rings stacked back-to-back. Interacts with the co-chaperonin GroES.

Its subcellular location is the cytoplasm. The enzyme catalyses ATP + H2O + a folded polypeptide = ADP + phosphate + an unfolded polypeptide.. Its function is as follows. Together with its co-chaperonin GroES, plays an essential role in assisting protein folding. The GroEL-GroES system forms a nano-cage that allows encapsulation of the non-native substrate proteins and provides a physical environment optimized to promote and accelerate protein folding. The sequence is that of Chaperonin GroEL from Yersinia enterocolitica serotype O:8 / biotype 1B (strain NCTC 13174 / 8081).